The primary structure comprises 1104 residues: MLPLRAFARLAQRPRLSRPTQLARSSLPRPSPSRPAAHYLALAPAPSTRFLHSSPPVLKEKRWLNNTPPEDDGEDGQNPKQDDQVEKPLPDAESSKSAEERAKSQSSKPDIKASSSDSVSSSAPAPGSADGGSPPGAGGPKEVAKPVIPEIYPQVLAIPITHRPLFPGFYKAVTVRSPPVIKAIRELQAHGQPYVGAFLLKDSTVDSDVVTDINQVQPVGVFCQITSCFTSQEGEGKPEALTAVLFPHRRIKINELVKSSGTKGDGTVGVGGLVEGSQDSAKGEGEVKSFESEVPGVEEVREELGTVSIDSEQPDVHKENRDLETKEVTQIDFLHSLLPQVSLTNVSNLSTEPYEKDSQVIRAIMSELISVFKEIAQLQPMFREQVTSFAISNTSSQVFDEPDKLADLAAVVSTADVSDLQAVLSSTSIEDRLQRALVLLKKELINAQLQFKISRDVDTKIQKRQREYYLMEQLKGIKKELGMESDGKDKLVEGFKEKASKLAMPEGVRKVFDEELNKLVHLEPAASEFNVTRNYIDWLTQVPWGVHTPENYNISHAIKILDEDHYGLKDVKDRILEFMAIGKLRGSVEGKILCLVGPPGVGKTSIGKSIAKALGRQFFRFSVGGLTDVAEIKGHRRTYIGAMPGKPIQALKKVATENPLILIDEVDKISKAYNGDPASALLEMLDPEQNKSFLDHYLDVPIDLSKVLFVCTANVLETIPGPLLDRMEVLEVSGYVSAEKMNIAERYLSPQAKVAAGLEDVNIELEPGAIEALIRYYCRESGVRNLKKHIDKIYRKAAFKIVTDLGESGLPEPATPPAENQVEAQYPDIKPASELTSNVIPGTEVSGVDTKTDVTTVPREPMKVPAGIHVKVTQENLKDYVGPPLYHKDRLYTHSPPAGVSTGLGYLGNGSGAVMPVEINSMPGKGNLQLTGKLGEVIRESAQIAMSWVKSNAYLLGITKSEAEATLNDRDVHLHMPEGGIGKEGPSAGTAILTAFVSLFTKTRVDPDIAMTGEISLLGQVLPVGGLKEKILAAHRAGIKKLIVPAGCKPDIDENVPESVKGGIEFVFVEDVRQVLHEAFRGTEVEKRWQETLPMEEEPQRERH.

Residues 1–58 constitute a mitochondrion transit peptide; it reads MLPLRAFARLAQRPRLSRPTQLARSSLPRPSPSRPAAHYLALAPAPSTRFLHSSPPVL. Residues 8–144 form a disordered region; sequence ARLAQRPRLS…PGAGGPKEVA (137 aa). Positions 22 to 46 are enriched in low complexity; sequence LARSSLPRPSPSRPAAHYLALAPAP. Residues 80–103 show a composition bias toward basic and acidic residues; sequence KQDDQVEKPLPDAESSKSAEERAK. Residues 104 to 128 are compositionally biased toward low complexity; it reads SQSSKPDIKASSSDSVSSSAPAPGS. The segment covering 129–139 has biased composition (gly residues); sequence ADGGSPPGAGG. A Lon N-terminal domain is found at 155–444; sequence VLAIPITHRP…RALVLLKKEL (290 aa). Residue 597–604 coordinates ATP; it reads GPPGVGKT. The Lon proteolytic domain occupies 895–1082; that stretch reads SPPAGVSTGL…RQVLHEAFRG (188 aa). Catalysis depends on residues S987 and K1030.

The protein belongs to the peptidase S16 family. Homohexamer or homoheptamer. Organized in a ring with a central cavity.

The protein localises to the mitochondrion matrix. It catalyses the reaction Hydrolysis of proteins in presence of ATP.. In terms of biological role, ATP-dependent serine protease that mediates the selective degradation of misfolded, unassembled or oxidatively damaged polypeptides as well as certain short-lived regulatory proteins in the mitochondrial matrix. May also have a chaperone function in the assembly of inner membrane protein complexes. Participates in the regulation of mitochondrial gene expression and in the maintenance of the integrity of the mitochondrial genome. Binds to mitochondrial DNA in a site-specific manner. The chain is Lon protease homolog, mitochondrial from Cryptococcus neoformans var. neoformans serotype D (strain B-3501A) (Filobasidiella neoformans).